A 109-amino-acid chain; its full sequence is MFGKGGLGNLMKQAQQMQEKMQKMQEEIAQLEVTGESGAGLIKVTINGAHNCRRVEIDPSLLEDDKEMLEDLVAAAFNDAARRIEETQKEKMASVSSGMQLPPGFKMPF.

It belongs to the YbaB/EbfC family. Homodimer.

It is found in the cytoplasm. It localises to the nucleoid. Functionally, binds to DNA and alters its conformation. May be involved in regulation of gene expression, nucleoid organization and DNA protection. The sequence is that of Nucleoid-associated protein YbaB from Escherichia coli O8 (strain IAI1).